Consider the following 431-residue polypeptide: Galactose-3-O-sulfotransferase 3 (431 aa).

The Cytoplasmic segment spans residues 1-19 (MPPILQRLQQSTKMMSHRK). A helical; Signal-anchor for type II membrane protein transmembrane segment spans residues 20-40 (ILLLVLGCSTVSLLIHQGSQL). The Lumenal segment spans residues 41–431 (SWYPKLFPLS…RALPRIPQGT (391 aa)). Asn91, Asn110, Asn177, and Asn302 each carry an N-linked (GlcNAc...) asparagine glycan. The disordered stretch occupies residues 400–431 (KRRGGVRSRPESVLDNPPPRPIRALPRIPQGT). The segment covering 421–431 (IRALPRIPQGT) has biased composition (low complexity).

This sequence belongs to the galactose-3-O-sulfotransferase family. The cofactor is Mg(2+).

It localises to the golgi apparatus. It is found in the golgi stack membrane. Its pathway is protein modification; carbohydrate sulfation. Transfers a sulfate to position 3 of non-reducing beta-galactosyl residues in N-glycans and core2-branched O-glycans. Has high activity towards Gal-beta-1,4-GlcNAc, Gal-beta-1,4(Fuc-alpha-1,3)GlcNAc and lower activity towards Gal-beta-1,3(Fuc-alpha-1,4)GlcNAc. This chain is Galactose-3-O-sulfotransferase 3 (Gal3st3), found in Mus musculus (Mouse).